Consider the following 562-residue polypeptide: MAQQMGNQPLIVLSEDSQRTSGEDAQSMNITAGKAVAESVRTTLGPKGMDKMLVDSSGEVVVTNDGVTILKEMDIEHPAANMIVEVAETQETEVGDGTTTSVVVSGELLSEAETLLEQDIHATTLAQGYRQAAEKAKELLDDAAIDVSADDTETLEKIAATAMTGKGAENAKGVLSDLVVRAVQSVADDNDVDTDNVKVEKVTGGAIENSELIEGVIVDKERVSENMPYAVEDANIALVDDGLEVQETEIDTEVNVTDPDQLQNFLDQEEEQLKEMVDALKDAGANVVFADSGIDDMAQHYLAKEGILAVRRAKSDDFTRLSRATGATPVSNVNDIEAADLGAAGSVAQKDIGGDERIFVEDVEEAKSVTLILRGGTEHVVDEVERAIEDSLGVVRVTLEDGQVMPGGGAPETELAMQLRDFADSVGGREQLAVEAFADALEVIPRTLAENAGHDPIDSLVDLRSQHDGGDTEAGLDAYNGDVIDMESEGIVEPLRVKTQAIESATEAATMILRIDDVIAAGDLAGGQVGDDDGDDGPAGGPGGMGGGMGGMGGMGGMGGAM.

Disordered stretches follow at residues methionine 1–glutamate 23 and glycine 526–glycine 551. Gly residues predominate over residues glycine 537–glycine 551.

This sequence belongs to the TCP-1 chaperonin family. Forms an oligomeric complex of eight-membered rings.

Functionally, molecular chaperone; binds unfolded polypeptides in vitro, and has a weak ATPase activity. This chain is Thermosome subunit alpha (thsA), found in Halobacterium salinarum (strain ATCC 700922 / JCM 11081 / NRC-1) (Halobacterium halobium).